The primary structure comprises 300 residues: N-acetylmuramic acid 6-phosphate etherase (300 aa).

Residues 57 to 220 form the SIS domain; that stretch reads IAVAFQSGGR…TTGAMIRTGK (164 aa). The active-site Proton donor is the Glu85. Glu116 is a catalytic residue.

Belongs to the GCKR-like family. MurNAc-6-P etherase subfamily. As to quaternary structure, homodimer.

It carries out the reaction N-acetyl-D-muramate 6-phosphate + H2O = N-acetyl-D-glucosamine 6-phosphate + (R)-lactate. Its pathway is amino-sugar metabolism; 1,6-anhydro-N-acetylmuramate degradation. It participates in amino-sugar metabolism; N-acetylmuramate degradation. The protein operates within cell wall biogenesis; peptidoglycan recycling. Its function is as follows. Specifically catalyzes the cleavage of the D-lactyl ether substituent of MurNAc 6-phosphate, producing GlcNAc 6-phosphate and D-lactate. Together with AnmK, is also required for the utilization of anhydro-N-acetylmuramic acid (anhMurNAc) either imported from the medium or derived from its own cell wall murein, and thus plays a role in cell wall recycling. The sequence is that of N-acetylmuramic acid 6-phosphate etherase from Aliivibrio fischeri (strain ATCC 700601 / ES114) (Vibrio fischeri).